Consider the following 332-residue polypeptide: MNKKVLTLSAVMASLLFGAHAHAADTRIGVTIYKYDDNFMSVVRKAIEKDGKSAPDVQLLMNDSQNDQSKQNDQIDVLLAKGVKALAINLVDPAAAGTVIEKARGQNVPVVFFNKEPSRKALDSYDKAYYVGTDSKESGVIQGDLIAKHWQANQGWDLNKDGKIQYVLLKGEPGHPDAEARTTYVVKELNDKGIQTEQLALDTAMWDTAQAKDKMDAWLSGPNANKIEVVIANNDAMAMGAVEALKAHNKSSIPVFGVDALPEALALVKSGAMAGTVLNDANNQAKATFDLAKNLAEGKGAADGTSWKIENKIVRVPYVGVDKDNLSEFTQK.

An N-terminal signal peptide occupies residues 1–23 (MNKKVLTLSAVMASLLFGAHAHA). Beta-D-galactose is bound by residues D37 and N114. Residues D37 and N114 each coordinate beta-D-glucose. Ca(2+)-binding residues include D157, N159, D161, K163, and Q165. Beta-D-galactose is bound by residues H175, D177, and R181. Positions 175, 177, and 181 each coordinate beta-D-glucose. E228 serves as a coordination point for Ca(2+). The beta-D-galactose site is built by N234, D259, and N279. N234, D259, and N279 together coordinate beta-D-glucose.

Belongs to the bacterial solute-binding protein 2 family. In terms of assembly, the ABC transporter complex is composed of one ATP-binding protein (MglA), two transmembrane proteins (MglC) and a solute-binding protein (MglB).

Its subcellular location is the periplasm. Functionally, part of the ABC transporter complex MglABC involved in galactose/methyl galactoside import. In addition, binds D-galactose and D-glucose and plays a role in the chemotaxis towards these two sugars by interacting with the Trg chemoreceptor. The protein is D-galactose/methyl-galactoside binding periplasmic protein MglB (mglB) of Salmonella typhimurium (strain LT2 / SGSC1412 / ATCC 700720).